The following is a 229-amino-acid chain: NAD(P)H-hydrate epimerase (229 aa).

One can recognise a YjeF N-terminal domain in the interval 10-217; it reads AINVDLELFN…ALQRKYELNL (208 aa). 60–64 is a binding site for (6S)-NADPHX; sequence NNGGD. The K(+) site is built by Asn-61 and Asp-125. Residues 129 to 135 and Asp-158 contribute to the (6S)-NADPHX site; that span reads GFSFKPP. Ser-161 is a K(+) binding site.

It belongs to the NnrE/AIBP family. The cofactor is K(+).

The catalysed reaction is (6R)-NADHX = (6S)-NADHX. It catalyses the reaction (6R)-NADPHX = (6S)-NADPHX. Its function is as follows. Catalyzes the epimerization of the S- and R-forms of NAD(P)HX, a damaged form of NAD(P)H that is a result of enzymatic or heat-dependent hydration. This is a prerequisite for the S-specific NAD(P)H-hydrate dehydratase to allow the repair of both epimers of NAD(P)HX. The chain is NAD(P)H-hydrate epimerase from Drosophila mojavensis (Fruit fly).